Consider the following 155-residue polypeptide: Large ribosomal subunit protein eL24 (155 aa).

Positions 119 to 155 are disordered; sequence VKAAKKAAAPAPAKKSAPKQKAAKVTQKAAPRVGGKR. The span at 124-133 shows a compositional bias: low complexity; that stretch reads KAAAPAPAKK.

This sequence belongs to the eukaryotic ribosomal protein eL24 family.

This chain is Large ribosomal subunit protein eL24 (RpL24), found in Drosophila melanogaster (Fruit fly).